The sequence spans 620 residues: MALLQIAEPGQSAAPHQHRLAVGIDLGTTNSLVAAVRSGVTATLPDENGQHSLPSIVRYTQDGIEVGQVAALSSAQDPKNTIVSVKRFMGRSLTDIQSGEQIFPYQFEASENGLPLFVTPQGQVNPVQVSAEILRPLVERAEKTLGGELQGVVITVPAYFDDAQRQGTKDAASLLGVKVLRLLNEPTAAAIAYGLDSKQEGVIAIYDLGGGTFDISILRLNRGVFEVLATGGDSALGGDDFDHLLQAHMQQVWQLTNLDPQLSRQLLIEARRVKEALTDASEVEASLTLADGTVLKQVVTKAEFDNLISALVKKTIASCRRTLRDAGVTADEVLETVMVGGSTRVPLVREQVEAFFGKAPLTSIDPDRVVAIGAAIQADILVGNKPESELLLLDVIPLSLGIETMGGLVEKVVSRNTTIPVARAQEFTTFKDGQTAMAFHVVQGERELVDDCRSLARFTLKGIPPLAAGAAHIRVTFQVDADGLLSVTAMEKSTGVQSSIQVKPSFGLSDTEIATMLKDSMKHAKEDISRRMLAEQQVEAARVLESLNAALAKDGDLLTSDERQQIDAVMAKLAEIARGDDADAIKQAIEVLDEHTQDFAAKRMDNSIRVAFKGQSIDNI.

This sequence belongs to the heat shock protein 70 family.

Functionally, chaperone involved in the maturation of iron-sulfur cluster-containing proteins. Has a low intrinsic ATPase activity which is markedly stimulated by HscB. The protein is Chaperone protein HscA homolog of Shewanella sp. (strain MR-7).